The sequence spans 202 residues: Probable nicotinate-nucleotide adenylyltransferase (202 aa).

Belongs to the NadD family.

It catalyses the reaction nicotinate beta-D-ribonucleotide + ATP + H(+) = deamido-NAD(+) + diphosphate. It participates in cofactor biosynthesis; NAD(+) biosynthesis; deamido-NAD(+) from nicotinate D-ribonucleotide: step 1/1. Catalyzes the reversible adenylation of nicotinate mononucleotide (NaMN) to nicotinic acid adenine dinucleotide (NaAD). This Bacteroides thetaiotaomicron (strain ATCC 29148 / DSM 2079 / JCM 5827 / CCUG 10774 / NCTC 10582 / VPI-5482 / E50) protein is Probable nicotinate-nucleotide adenylyltransferase.